The chain runs to 388 residues: F-box protein At5g42460 (388 aa).

The region spanning 1 to 47 is the F-box domain; that stretch reads MTIMSDLPRDLLAEILSRVPLTSLRAVRLTCKKWNDLSKDRSFLKKQ.

The sequence is that of F-box protein At5g42460 from Arabidopsis thaliana (Mouse-ear cress).